Consider the following 531-residue polypeptide: High-affinity glucose transporter ght2 (531 aa).

The Cytoplasmic segment spans residues 5 to 13 (RGKNFTLVM). Residues 14 to 34 (LIFVSMAGWMFGADTGSIGGV) traverse the membrane as a helical segment. Over 35 to 62 (TSMRDFRERYADRYDPITDQYSLSSARQ) the chain is Extracellular. A helical membrane pass occupies residues 63–83 (GLLTGMVNVGSLFGCIISSPI). Topologically, residues 84–91 (ADRFGKRL) are cytoplasmic. Residues 92–112 (SIIGFCAVYIIGIIVQVTAVP) traverse the membrane as a helical segment. At 113–116 (SWVQ) the chain is on the extracellular side. A helical membrane pass occupies residues 117–137 (IMVAKIWTGIGIGALSVLAPG). The Cytoplasmic segment spans residues 138–148 (YQSETAPPSIR). A helical transmembrane segment spans residues 149 to 169 (GTVVVTYQLFVTGGIFIAACI). At 170-183 (NMGTHKLHKTAQWR) the chain is on the extracellular side. Residues 184–204 (VSIGINLLWGIITMIGILFLP) form a helical membrane-spanning segment. The Cytoplasmic segment spans residues 205 to 270 (ESPRYLIQVG…IFGKDIRYRT (66 aa)). A helical transmembrane segment spans residues 271 to 289 (FLGMFVMSLQQLTGNNYFF). Residues 290 to 305 (YYGFSVMQGAGINSPY) lie on the Extracellular side of the membrane. Residues 306–326 (LSAMILDAVNFGCTFGGMYVL) form a helical membrane-spanning segment. The Cytoplasmic segment spans residues 327–332 (ERFGRR). Residues 333–353 (NPLIIGGIWQSICFFIYSAVG) traverse the membrane as a helical segment. The Extracellular portion of the chain corresponds to 354 to 367 (SRALYHKNGTSNTR). A glycan (N-linked (GlcNAc...) asparagine) is linked at asparagine 361. A helical transmembrane segment spans residues 368–388 (AGAVMIVMACLFIFGFAQTWA). Residues 389–408 (PAAYVIVGESYPVRYRSKCA) lie on the Cytoplasmic side of the membrane. A helical transmembrane segment spans residues 409–429 (AVATASNWLWNFLISFFTPFI). Topologically, residues 430–436 (QASIGFK) are extracellular. Residues 437 to 457 (YGYVFASCNLTGAIVIFLFAK) form a helical membrane-spanning segment. Over 458–531 (ETKGLTLEEI…QYSSHEEDYA (74 aa)) the chain is Cytoplasmic. Residues 491 to 531 (KKVEKEKSRKGGARGESVEYVERASNTDSSPQYSSHEEDYA) are disordered. Residues serine 507, serine 515, serine 519, and serine 520 each carry the phosphoserine modification. Positions 514 to 524 (ASNTDSSPQYS) are enriched in polar residues. Tyrosine 523 carries the phosphotyrosine modification.

The protein belongs to the major facilitator superfamily. Sugar transporter (TC 2.A.1.1) family.

Its subcellular location is the membrane. Its function is as follows. High-affinity glucose transporter. This is High-affinity glucose transporter ght2 (ght2) from Schizosaccharomyces pombe (strain 972 / ATCC 24843) (Fission yeast).